The sequence spans 100 residues: Large ribosomal subunit protein uL23 (100 aa).

The protein belongs to the universal ribosomal protein uL23 family. Part of the 50S ribosomal subunit. Contacts protein L29, and trigger factor when it is bound to the ribosome.

In terms of biological role, one of the early assembly proteins it binds 23S rRNA. One of the proteins that surrounds the polypeptide exit tunnel on the outside of the ribosome. Forms the main docking site for trigger factor binding to the ribosome. The chain is Large ribosomal subunit protein uL23 from Shewanella pealeana (strain ATCC 700345 / ANG-SQ1).